The sequence spans 304 residues: Porphobilinogen deaminase (304 aa).

The residue at position 240 (Cys-240) is an S-(dipyrrolylmethanemethyl)cysteine.

The protein belongs to the HMBS family. Monomer. Dipyrromethane serves as cofactor.

The catalysed reaction is 4 porphobilinogen + H2O = hydroxymethylbilane + 4 NH4(+). The protein operates within porphyrin-containing compound metabolism; protoporphyrin-IX biosynthesis; coproporphyrinogen-III from 5-aminolevulinate: step 2/4. Its function is as follows. Tetrapolymerization of the monopyrrole PBG into the hydroxymethylbilane pre-uroporphyrinogen in several discrete steps. This Xanthomonas axonopodis pv. citri (strain 306) protein is Porphobilinogen deaminase.